The primary structure comprises 50 residues: Bacterioferritin (50 aa).

A Ferritin-like diiron domain is found at 1-50 (MKGDPKVIDYLNKALRHELTAINQYWLHYRLLDNWGIKDLAKKWRAESIE). Fe cation is bound at residue E18.

It belongs to the bacterioferritin family. As to quaternary structure, homooligomer of 24 subunits, arranged as 12 dimers, that are packed together to form an approximately spherical molecule with a central cavity, in which large amounts of iron can be deposited. It depends on heme b as a cofactor.

The enzyme catalyses 4 Fe(2+) + O2 + 4 H(+) = 4 Fe(3+) + 2 H2O. It catalyses the reaction Fe(2+)(in) = Fe(2+)(out). Its function is as follows. Iron-storage protein, whose ferroxidase center binds Fe(2+), oxidizes it using dioxygen to Fe(3+), and participates in the subsequent Fe(3+) oxide mineral core formation within the central cavity of the BFR protein shell. May act as one of the electron carriers in the reverse electron-transport system from cytochrome c-552 to NADP(+). The protein is Bacterioferritin (bfr) of Nitrobacter winogradskyi (Nitrobacter agilis).